The following is a 386-amino-acid chain: MINTKEDFLLLIKQIEQKSGYKKPKAFGIARLDRGQLNKNKILQASFALINYEQNFGSAAIMLEAFMQRGVEIDFNASEFVQTLKLEDIDFALSCFKPFLEEDGHQNIDLLKIIKDKFKDDEFSFVCLFEDKEPLSVESIYLKLYLLSTKKVPLRSINLNGAFGLLSNVAWSDDKPIELEYLRANEMRLKMSNQYPKIDFVDKFPRFLAHIIPEDNTRILESSKVRMGASLAAGTTIMPGASYVNFNAGTTGACMVEGRISSSAIVGEGSDVGGGASILGVLSGTSGNAISVGKACLLGANSVTGIPLGDNCIVDAGIAVLEGTKFLLKDAEELAKLNPYFNFDKEIYKGLELKGLNGLHFRQDSISGAMIVALNKKAVKLNEALH.

Glu-257 (acyl-anhydride intermediate) is an active-site residue. Succinyl-CoA contacts are provided by residues Arg-259, Gly-274, Ser-277, Ala-300, Asp-315 to Ala-316, Gly-323, Lys-349, and Arg-362 to Ser-365.

This sequence belongs to the type 2 tetrahydrodipicolinate N-succinyltransferase family. Homotrimer.

The protein resides in the cytoplasm. It catalyses the reaction (S)-2,3,4,5-tetrahydrodipicolinate + succinyl-CoA + H2O = (S)-2-succinylamino-6-oxoheptanedioate + CoA. It participates in amino-acid biosynthesis; L-lysine biosynthesis via DAP pathway; LL-2,6-diaminopimelate from (S)-tetrahydrodipicolinate (succinylase route): step 1/3. Its function is as follows. Catalyzes the conversion of the cyclic tetrahydrodipicolinate (THDP) into the acyclic N-succinyl-L-2-amino-6-oxopimelate using succinyl-CoA. The sequence is that of 2,3,4,5-tetrahydropyridine-2,6-dicarboxylate N-succinyltransferase from Campylobacter jejuni subsp. jejuni serotype O:2 (strain ATCC 700819 / NCTC 11168).